Here is a 389-residue protein sequence, read N- to C-terminus: Aspartate aminotransferase (389 aa).

L-aspartate-binding residues include glycine 34 and asparagine 171. Lysine 233 carries the post-translational modification N6-(pyridoxal phosphate)lysine. Arginine 362 is a binding site for L-aspartate.

This sequence belongs to the class-I pyridoxal-phosphate-dependent aminotransferase family. As to quaternary structure, homodimer. The cofactor is pyridoxal 5'-phosphate.

The protein resides in the cytoplasm. It catalyses the reaction L-aspartate + 2-oxoglutarate = oxaloacetate + L-glutamate. This is Aspartate aminotransferase (aspC) from Pyrococcus abyssi (strain GE5 / Orsay).